A 315-amino-acid polypeptide reads, in one-letter code: MYDWLNALPKAELHLHLEGSLEPELLFALAERNKIELPWADVETLRAAYAFNNLQEFLDLYYQGANVLRSEQDFYDLTWAYLQRCKAQNVVHVEPFFDPQTHTDRGIPFEVVLRGIRQALLDGEKQLGISHGLILSFLRHLPEEEAFKTLEQAMPFRDAFIGVGLDSSEKGFPPRLFERVFAKARSEGLHAVAHAGEEGPPEYIWEALDLLKVERIDHGVRAIEDERLMQRIIDEQIPLTVCPLSNIKLCVFEHMGQHNILDMLERGVKVTVNSDDPAYFGGYVGENFAALHEHLGMSEEQARRLAQNSLDARLA.

Positions 14, 16, and 194 each coordinate Zn(2+). Glutamate 197 functions as the Proton donor in the catalytic mechanism. A Zn(2+)-binding site is contributed by aspartate 275. Aspartate 276 lines the substrate pocket.

The protein belongs to the metallo-dependent hydrolases superfamily. Adenosine and AMP deaminases family. Adenine deaminase type 2 subfamily. Zn(2+) serves as cofactor.

The enzyme catalyses adenine + H2O + H(+) = hypoxanthine + NH4(+). In terms of biological role, catalyzes the hydrolytic deamination of adenine to hypoxanthine. Plays an important role in the purine salvage pathway and in nitrogen catabolism. In Ectopseudomonas mendocina (strain ymp) (Pseudomonas mendocina), this protein is Adenine deaminase.